A 340-amino-acid polypeptide reads, in one-letter code: S-adenosylmethionine:tRNA ribosyltransferase-isomerase (340 aa).

Belongs to the QueA family. In terms of assembly, monomer.

It is found in the cytoplasm. It catalyses the reaction 7-aminomethyl-7-carbaguanosine(34) in tRNA + S-adenosyl-L-methionine = epoxyqueuosine(34) in tRNA + adenine + L-methionine + 2 H(+). The protein operates within tRNA modification; tRNA-queuosine biosynthesis. Its function is as follows. Transfers and isomerizes the ribose moiety from AdoMet to the 7-aminomethyl group of 7-deazaguanine (preQ1-tRNA) to give epoxyqueuosine (oQ-tRNA). The polypeptide is S-adenosylmethionine:tRNA ribosyltransferase-isomerase (Chlorobaculum parvum (strain DSM 263 / NCIMB 8327) (Chlorobium vibrioforme subsp. thiosulfatophilum)).